A 248-amino-acid polypeptide reads, in one-letter code: UPF0173 metal-dependent hydrolase Hlac_1347 (248 aa).

Belongs to the UPF0173 family.

The polypeptide is UPF0173 metal-dependent hydrolase Hlac_1347 (Halorubrum lacusprofundi (strain ATCC 49239 / DSM 5036 / JCM 8891 / ACAM 34)).